Here is a 535-residue protein sequence, read N- to C-terminus: CTP synthase (535 aa).

Positions 1-266 are amidoligase domain; that stretch reads MKFVVITGGV…GDYICERLGL (266 aa). Residue serine 12 coordinates CTP. Residue serine 12 coordinates UTP. ATP is bound by residues 13 to 18 and aspartate 70; that span reads GIGKGI. The Mg(2+) site is built by aspartate 70 and glutamate 140. Residues 147–149, 187–192, and lysine 223 each bind CTP; these read DIE and KTKPTQ. Residues 187–192 and lysine 223 each bind UTP; that span reads KTKPTQ. In terms of domain architecture, Glutamine amidotransferase type-1 spans 291-535; the sequence is RIAVVGKYVD…IKAAAGQGPD (245 aa). Residue glycine 355 coordinates L-glutamine. Cysteine 382 serves as the catalytic Nucleophile; for glutamine hydrolysis. L-glutamine contacts are provided by residues 383–386, glutamate 406, and arginine 464; that span reads LGFQ. Residues histidine 508 and glutamate 510 contribute to the active site.

Belongs to the CTP synthase family. Homotetramer.

The enzyme catalyses UTP + L-glutamine + ATP + H2O = CTP + L-glutamate + ADP + phosphate + 2 H(+). It catalyses the reaction L-glutamine + H2O = L-glutamate + NH4(+). The catalysed reaction is UTP + NH4(+) + ATP = CTP + ADP + phosphate + 2 H(+). The protein operates within pyrimidine metabolism; CTP biosynthesis via de novo pathway; CTP from UDP: step 2/2. Allosterically activated by GTP, when glutamine is the substrate; GTP has no effect on the reaction when ammonia is the substrate. The allosteric effector GTP functions by stabilizing the protein conformation that binds the tetrahedral intermediate(s) formed during glutamine hydrolysis. Inhibited by the product CTP, via allosteric rather than competitive inhibition. Catalyzes the ATP-dependent amination of UTP to CTP with either L-glutamine or ammonia as the source of nitrogen. Regulates intracellular CTP levels through interactions with the four ribonucleotide triphosphates. The sequence is that of CTP synthase from Methanopyrus kandleri (strain AV19 / DSM 6324 / JCM 9639 / NBRC 100938).